The following is a 473-amino-acid chain: Tyrosine phenol-lyase (473 aa).

Lysine 257 is modified (N6-(pyridoxal phosphate)lysine).

The protein belongs to the beta-eliminating lyase family. In terms of assembly, homotetramer. Pyridoxal 5'-phosphate serves as cofactor.

It catalyses the reaction L-tyrosine + H2O = phenol + pyruvate + NH4(+). In Intrasporangium calvum (strain ATCC 23552 / DSM 43043 / JCM 3097 / NBRC 12989 / NCIMB 10167 / NRRL B-3866 / 7 KIP), this protein is Tyrosine phenol-lyase.